Consider the following 411-residue polypeptide: tRNA (uracil(54)-C(5))-methyltransferase (411 aa).

[4Fe-4S] cluster-binding residues include C62, C68, C71, and C138. Residues Q254, Y280, T285, 301 to 302 (DS), D328, and D342 each bind S-adenosyl-L-methionine. Catalysis depends on C369, which acts as the Nucleophile. Residue E402 is the Proton acceptor of the active site.

It belongs to the class I-like SAM-binding methyltransferase superfamily. RNA M5U methyltransferase family.

The enzyme catalyses uridine(54) in tRNA + S-adenosyl-L-methionine = 5-methyluridine(54) in tRNA + S-adenosyl-L-homocysteine + H(+). Functionally, catalyzes the formation of 5-methyl-uridine at position 54 (m5U54) in tRNA. The sequence is that of tRNA (uracil(54)-C(5))-methyltransferase from Pyrococcus furiosus (strain ATCC 43587 / DSM 3638 / JCM 8422 / Vc1).